A 180-amino-acid polypeptide reads, in one-letter code: Cuticle protein 3 (180 aa).

The signal sequence occupies residues 1–16; that stretch reads MMKLIVLAAFIGVCAG. Positions 58-121 constitute a Chitin-binding type R&amp;R domain; the sequence is EQGFRYAYET…PQGAHFPTPP (64 aa).

The polypeptide is Cuticle protein 3 (Lonomia obliqua (Moth)).